A 78-amino-acid polypeptide reads, in one-letter code: Acyl carrier protein (78 aa).

A Carrier domain is found at 2 to 77 (SDTAERVKKI…DAVKYIEKAT (76 aa)). At S37 the chain carries O-(pantetheine 4'-phosphoryl)serine.

Belongs to the acyl carrier protein (ACP) family. In terms of processing, 4'-phosphopantetheine is transferred from CoA to a specific serine of apo-ACP by AcpS. This modification is essential for activity because fatty acids are bound in thioester linkage to the sulfhydryl of the prosthetic group.

It is found in the cytoplasm. It participates in lipid metabolism; fatty acid biosynthesis. Its function is as follows. Carrier of the growing fatty acid chain in fatty acid biosynthesis. This Chelativorans sp. (strain BNC1) protein is Acyl carrier protein.